A 105-amino-acid chain; its full sequence is Large ribosomal subunit protein uL23 (105 aa).

It belongs to the universal ribosomal protein uL23 family. In terms of assembly, part of the 50S ribosomal subunit. Contacts protein L29, and trigger factor when it is bound to the ribosome.

In terms of biological role, one of the early assembly proteins it binds 23S rRNA. One of the proteins that surrounds the polypeptide exit tunnel on the outside of the ribosome. Forms the main docking site for trigger factor binding to the ribosome. This chain is Large ribosomal subunit protein uL23, found in Herminiimonas arsenicoxydans.